A 943-amino-acid polypeptide reads, in one-letter code: Isoleucine--tRNA ligase (943 aa).

The 'HIGH' region motif lies at 59-69 (PYANGQIHLGH). Glu-577 provides a ligand contact to L-isoleucyl-5'-AMP. A 'KMSKS' region motif is present at residues 618–622 (KMSKS). Lys-621 contributes to the ATP binding site. 4 residues coordinate Zn(2+): Cys-906, Cys-909, Cys-926, and Cys-929.

It belongs to the class-I aminoacyl-tRNA synthetase family. IleS type 1 subfamily. In terms of assembly, monomer. Zn(2+) serves as cofactor.

Its subcellular location is the cytoplasm. It catalyses the reaction tRNA(Ile) + L-isoleucine + ATP = L-isoleucyl-tRNA(Ile) + AMP + diphosphate. Functionally, catalyzes the attachment of isoleucine to tRNA(Ile). As IleRS can inadvertently accommodate and process structurally similar amino acids such as valine, to avoid such errors it has two additional distinct tRNA(Ile)-dependent editing activities. One activity is designated as 'pretransfer' editing and involves the hydrolysis of activated Val-AMP. The other activity is designated 'posttransfer' editing and involves deacylation of mischarged Val-tRNA(Ile). The polypeptide is Isoleucine--tRNA ligase (Xanthomonas campestris pv. campestris (strain 8004)).